Here is a 258-residue protein sequence, read N- to C-terminus: HVA22-like protein j (258 aa).

The segment at 153–258 is disordered; that stretch reads AANQPPTERN…RSNSRTQPAA (106 aa). The segment covering 156 to 169 has biased composition (polar residues); that stretch reads QPPTERNVNMNAQS. Residues 206–215 are compositionally biased toward pro residues; the sequence is WPPPTPPPTP.

The protein belongs to the DP1 family.

This is HVA22-like protein j (HVA22J) from Arabidopsis thaliana (Mouse-ear cress).